A 103-amino-acid chain; its full sequence is Large ribosomal subunit protein bL21 (103 aa).

It belongs to the bacterial ribosomal protein bL21 family. As to quaternary structure, part of the 50S ribosomal subunit. Contacts protein L20.

This protein binds to 23S rRNA in the presence of protein L20. The sequence is that of Large ribosomal subunit protein bL21 from Borrelia garinii subsp. bavariensis (strain ATCC BAA-2496 / DSM 23469 / PBi) (Borreliella bavariensis).